The chain runs to 511 residues: ESX-1 secretion system protein EccD1 (511 aa).

The residue at position 2 (Ser2) is an N-acetylserine. Topologically, residues 2–143 are cytoplasmic; it reads SAPAVAAGPT…PEFDRTALNR (142 aa). A helical membrane pass occupies residues 144–164; the sequence is FVGAAIPLLTAPVIGMAMRAW. Topologically, residues 165–170 are periplasmic; it reads WETGRS. The chain crosses the membrane as a helical span at residues 171–191; sequence LWWPLAIGILGIAVLVGSFVA. The Cytoplasmic portion of the chain corresponds to 192 to 202; it reads NRFYQSGHLAE. The chain crosses the membrane as a helical span at residues 203 to 223; sequence CLLVTTYLLIATAAALAVPLP. The Periplasmic portion of the chain corresponds to 224–227; that stretch reads RGVN. The chain crosses the membrane as a helical span at residues 228 to 248; that stretch reads SLGAPQVAGAATAVLFLTLMT. Topologically, residues 249-257 are cytoplasmic; that stretch reads RGGPRKRHE. A helical membrane pass occupies residues 258 to 278; it reads LASFAVITAIAVIAAAAAFGY. At 279-285 the chain is on the periplasmic side; the sequence is GYQDWVP. The helical transmembrane segment at 286–306 threads the bilayer; it reads AGGIAFGLFIVTNAAKLTVAV. Residues 307-367 are Cytoplasmic-facing; sequence ARIALPPIPV…TERSKLAKQL (61 aa). Helical transmembrane passes span 368-388 and 389-409; these read LIGYVTSGTLILAAGAIAVVV and RGHFFVHSLVVAGLITTVCGF. Residues 410–420 are Cytoplasmic-facing; it reads RSRLYAERWCA. The chain crosses the membrane as a helical span at residues 421-441; that stretch reads WALLAATVAIPTGLTAKLIIW. Over 442–444 the chain is Periplasmic; that stretch reads YPH. The chain crosses the membrane as a helical span at residues 445 to 465; the sequence is YAWLLLSVYLTVALVALVVVG. Residues 466-482 lie on the Cytoplasmic side of the membrane; that stretch reads SMAHVRRVSPVVKRTLE. Residues 483–503 traverse the membrane as a helical segment; sequence LIDGAMIAAIIPMLLWITGVY. Over 504-511 the chain is Periplasmic; it reads DTVRNIRF.

The protein belongs to the EccD/Snm4 family. As to quaternary structure, possibly a homodimer. Part of the ESX-1 / type VII secretion system (T7SS), which is composed of cytosolic and membrane components. The ESX-1 membrane complex is composed of EccB1, EccCa1, EccCb1, EccD1 and EccE1.

The protein resides in the cell inner membrane. Functionally, part of the ESX-1 specialized secretion system, which delivers several virulence factors to host cells during infection, including the key virulence factors EsxA (ESAT-6) and EsxB (CFP-10). The sequence is that of ESX-1 secretion system protein EccD1 from Mycobacterium tuberculosis (strain ATCC 25618 / H37Rv).